A 291-amino-acid polypeptide reads, in one-letter code: Glutamate racemase (291 aa).

Substrate-binding positions include 12–13 and 44–45; these read DS and YG. The active-site Proton donor/acceptor is the Cys-75. A substrate-binding site is contributed by 76 to 77; sequence NT. Cys-187 (proton donor/acceptor) is an active-site residue. 188-189 is a binding site for substrate; it reads TH. Over residues 234–247 the composition is skewed to low complexity; the sequence is ATQAAGARAQMAPS. Residues 234 to 257 form a disordered region; the sequence is ATQAAGARAQMAPSAPEPKEGTPD.

Belongs to the aspartate/glutamate racemases family.

The catalysed reaction is L-glutamate = D-glutamate. Its pathway is cell wall biogenesis; peptidoglycan biosynthesis. In terms of biological role, provides the (R)-glutamate required for cell wall biosynthesis. This Koribacter versatilis (strain Ellin345) protein is Glutamate racemase.